A 557-amino-acid polypeptide reads, in one-letter code: Dihydroxy-acid dehydratase (557 aa).

Mg(2+) is bound at residue Asp78. Cys119 is a [2Fe-2S] cluster binding site. The Mg(2+) site is built by Asp120 and Lys121. Lys121 is modified (N6-carboxylysine). Cys192 is a [2Fe-2S] cluster binding site. Glu446 is a binding site for Mg(2+). Residue Ser472 is the Proton acceptor of the active site.

It belongs to the IlvD/Edd family. Homodimer. [2Fe-2S] cluster is required as a cofactor. Requires Mg(2+) as cofactor.

The enzyme catalyses (2R)-2,3-dihydroxy-3-methylbutanoate = 3-methyl-2-oxobutanoate + H2O. It catalyses the reaction (2R,3R)-2,3-dihydroxy-3-methylpentanoate = (S)-3-methyl-2-oxopentanoate + H2O. The protein operates within amino-acid biosynthesis; L-isoleucine biosynthesis; L-isoleucine from 2-oxobutanoate: step 3/4. Its pathway is amino-acid biosynthesis; L-valine biosynthesis; L-valine from pyruvate: step 3/4. In terms of biological role, functions in the biosynthesis of branched-chain amino acids. Catalyzes the dehydration of (2R,3R)-2,3-dihydroxy-3-methylpentanoate (2,3-dihydroxy-3-methylvalerate) into 2-oxo-3-methylpentanoate (2-oxo-3-methylvalerate) and of (2R)-2,3-dihydroxy-3-methylbutanoate (2,3-dihydroxyisovalerate) into 2-oxo-3-methylbutanoate (2-oxoisovalerate), the penultimate precursor to L-isoleucine and L-valine, respectively. In Campylobacter curvus (strain 525.92), this protein is Dihydroxy-acid dehydratase.